The sequence spans 203 residues: Protein GrpE (203 aa).

The segment covering 1-10 has biased composition (basic and acidic residues); it reads MSNESIKAEQ. The tract at residues 1 to 20 is disordered; sequence MSNESIKAEQDLIQEGVESE.

This sequence belongs to the GrpE family. As to quaternary structure, homodimer.

It is found in the cytoplasm. Its function is as follows. Participates actively in the response to hyperosmotic and heat shock by preventing the aggregation of stress-denatured proteins, in association with DnaK and GrpE. It is the nucleotide exchange factor for DnaK and may function as a thermosensor. Unfolded proteins bind initially to DnaJ; upon interaction with the DnaJ-bound protein, DnaK hydrolyzes its bound ATP, resulting in the formation of a stable complex. GrpE releases ADP from DnaK; ATP binding to DnaK triggers the release of the substrate protein, thus completing the reaction cycle. Several rounds of ATP-dependent interactions between DnaJ, DnaK and GrpE are required for fully efficient folding. This Shewanella sp. (strain MR-4) protein is Protein GrpE.